Here is a 237-residue protein sequence, read N- to C-terminus: Uridylate kinase (237 aa).

9 to 12 (KLSG) contacts ATP. Positions 17 to 22 (GTQGYG) are involved in allosteric activation by GTP. Glycine 51 contacts UMP. Positions 52 and 56 each coordinate ATP. UMP contacts are provided by residues aspartate 71 and 132–139 (CGNPFFTT). 3 residues coordinate ATP: threonine 159, tyrosine 165, and aspartate 168.

Belongs to the UMP kinase family. As to quaternary structure, homohexamer.

It localises to the cytoplasm. The catalysed reaction is UMP + ATP = UDP + ADP. It functions in the pathway pyrimidine metabolism; CTP biosynthesis via de novo pathway; UDP from UMP (UMPK route): step 1/1. Its activity is regulated as follows. Allosterically activated by GTP. Inhibited by UTP. Functionally, catalyzes the reversible phosphorylation of UMP to UDP. This is Uridylate kinase from Parasynechococcus marenigrum (strain WH8102).